The primary structure comprises 63 residues: MKANELREKSVEELNAELLNLLREQFNLRMQAASGQLQQTHLLKQVRRNVARVKTLLTQKAGA.

This sequence belongs to the universal ribosomal protein uL29 family.

The polypeptide is Large ribosomal subunit protein uL29 (Enterobacter sp. (strain 638)).